Consider the following 394-residue polypeptide: Phosphoglycerate kinase (394 aa).

Residues 21-23 (DFN), R36, 59-62 (HLGR), R118, and R151 contribute to the substrate site. S183 carries the phosphoserine modification. K201 contributes to the ATP binding site. T299 bears the Phosphothreonine mark. ATP is bound by residues E323 and 350–353 (GGDS).

Belongs to the phosphoglycerate kinase family. Monomer.

The protein localises to the cytoplasm. It catalyses the reaction (2R)-3-phosphoglycerate + ATP = (2R)-3-phospho-glyceroyl phosphate + ADP. The protein operates within carbohydrate degradation; glycolysis; pyruvate from D-glyceraldehyde 3-phosphate: step 2/5. The chain is Phosphoglycerate kinase from Halalkalibacterium halodurans (strain ATCC BAA-125 / DSM 18197 / FERM 7344 / JCM 9153 / C-125) (Bacillus halodurans).